Consider the following 97-residue polypeptide: Co-chaperonin GroES (97 aa).

The protein belongs to the GroES chaperonin family. In terms of assembly, heptamer of 7 subunits arranged in a ring. Interacts with the chaperonin GroEL.

The protein resides in the cytoplasm. Together with the chaperonin GroEL, plays an essential role in assisting protein folding. The GroEL-GroES system forms a nano-cage that allows encapsulation of the non-native substrate proteins and provides a physical environment optimized to promote and accelerate protein folding. GroES binds to the apical surface of the GroEL ring, thereby capping the opening of the GroEL channel. This is Co-chaperonin GroES from Pseudomonas fluorescens (strain Pf0-1).